The following is a 681-amino-acid chain: Mating-type protein beta1-1 (681 aa).

Residues 165-227 (DKNEPTSPTP…DARRRIGWNE (63 aa)) constitute a DNA-binding region (homeobox; TALE-type). Positions 307–318 (LKNDEARRKREA) are enriched in basic and acidic residues. Disordered regions lie at residues 307-341 (LKND…SPAS), 353-381 (AIDS…SPLC), and 394-466 (SPVK…SDPF). Positions 413 to 430 (TSAAPSPQPSLLPKLTPT) are enriched in low complexity.

The protein belongs to the TALE/M-ATYP homeobox family. May dimerize.

The protein resides in the nucleus. Has a major regulatory role in sexual and asexual development. It may bind DNA itself or it may have a role in preventing DNA-binding of another protein. The chain is Mating-type protein beta1-1 from Coprinopsis cinerea (Inky cap fungus).